Reading from the N-terminus, the 428-residue chain is Serine--tRNA ligase (428 aa).

Residue Thr231–Glu233 coordinates L-serine. Arg262 to Glu264 lines the ATP pocket. Residue Glu285 participates in L-serine binding. Glu349–Ser352 is a binding site for ATP. L-serine is bound at residue Ser385.

This sequence belongs to the class-II aminoacyl-tRNA synthetase family. Type-1 seryl-tRNA synthetase subfamily. In terms of assembly, homodimer. The tRNA molecule binds across the dimer.

The protein resides in the cytoplasm. It catalyses the reaction tRNA(Ser) + L-serine + ATP = L-seryl-tRNA(Ser) + AMP + diphosphate + H(+). The catalysed reaction is tRNA(Sec) + L-serine + ATP = L-seryl-tRNA(Sec) + AMP + diphosphate + H(+). Its pathway is aminoacyl-tRNA biosynthesis; selenocysteinyl-tRNA(Sec) biosynthesis; L-seryl-tRNA(Sec) from L-serine and tRNA(Sec): step 1/1. In terms of biological role, catalyzes the attachment of serine to tRNA(Ser). Is also able to aminoacylate tRNA(Sec) with serine, to form the misacylated tRNA L-seryl-tRNA(Sec), which will be further converted into selenocysteinyl-tRNA(Sec). The chain is Serine--tRNA ligase from Methylorubrum populi (strain ATCC BAA-705 / NCIMB 13946 / BJ001) (Methylobacterium populi).